The sequence spans 160 residues: UPF0262 protein Mrad2831_3513 (160 aa).

This sequence belongs to the UPF0262 family.

In Methylobacterium radiotolerans (strain ATCC 27329 / DSM 1819 / JCM 2831 / NBRC 15690 / NCIMB 10815 / 0-1), this protein is UPF0262 protein Mrad2831_3513.